Here is an 875-residue protein sequence, read N- to C-terminus: Alanine--tRNA ligase (875 aa).

The Zn(2+) site is built by H564, H568, C666, and H670.

This sequence belongs to the class-II aminoacyl-tRNA synthetase family. As to quaternary structure, homotetramer. Zn(2+) is required as a cofactor.

Its subcellular location is the cytoplasm. It carries out the reaction tRNA(Ala) + L-alanine + ATP = L-alanyl-tRNA(Ala) + AMP + diphosphate. In terms of biological role, catalyzes the attachment of alanine to tRNA(Ala) in a two-step reaction: alanine is first activated by ATP to form Ala-AMP and then transferred to the acceptor end of tRNA(Ala). Also edits incorrectly charged Ser-tRNA(Ala) and Gly-tRNA(Ala) via its editing domain. The protein is Alanine--tRNA ligase of Yersinia pestis bv. Antiqua (strain Angola).